A 236-amino-acid polypeptide reads, in one-letter code: V-set and transmembrane domain-containing protein 2A (236 aa).

An N-terminal signal peptide occupies residues 1-24 (MMGIFLVYVGFVFFSVLYVQQGLS). Residues 27 to 143 (AKFTEFPRNV…YGELQEHKAQ (117 aa)) enclose the Ig-like V-type domain. The N-linked (GlcNAc...) asparagine glycan is linked to N35. A disulfide bridge links C48 with C127. N-linked (GlcNAc...) asparagine glycosylation occurs at N175. Polar residues predominate over residues 184–199 (IHGSANQRTHSTSSPQ). The disordered stretch occupies residues 184 to 206 (IHGSANQRTHSTSSPQVVAKIPK).

As to quaternary structure, homodimer. In terms of processing, N-glycosylated. N-linked glycosylation is critical for secretion but not for preadipocyte cell differentiation activity.

The protein resides in the secreted. Plays a role in the regulation of the early stage of white and brown preadipocyte cell differentiation. Promotes adipogenic commitment of preadipocytes by increasing gene expression of the transcription factor PPARG in a BMP4-dependent signaling pathway. In Homo sapiens (Human), this protein is V-set and transmembrane domain-containing protein 2A.